The primary structure comprises 114 residues: Nucleoid-associated protein Cyan7425_0899 (114 aa).

Belongs to the YbaB/EbfC family. In terms of assembly, homodimer.

The protein localises to the cytoplasm. Its subcellular location is the nucleoid. Its function is as follows. Binds to DNA and alters its conformation. May be involved in regulation of gene expression, nucleoid organization and DNA protection. The chain is Nucleoid-associated protein Cyan7425_0899 from Cyanothece sp. (strain PCC 7425 / ATCC 29141).